The primary structure comprises 61 residues: Large ribosomal subunit protein bL32 (61 aa).

The segment covering 1 to 16 (MAVPKRKTSPSKRGMR) has biased composition (basic residues). The disordered stretch occupies residues 1-61 (MAVPKRKTSP…RSVLTPKNSG (61 aa)). Residues 28–44 (VEDKDSGELRRPHHIDL) show a composition bias toward basic and acidic residues.

It belongs to the bacterial ribosomal protein bL32 family.

This chain is Large ribosomal subunit protein bL32, found in Bartonella bacilliformis (strain ATCC 35685 / KC583 / Herrer 020/F12,63).